We begin with the raw amino-acid sequence, 497 residues long: ATP synthase subunit alpha 2 (497 aa).

167 to 174 serves as a coordination point for ATP; sequence GERATGKT.

The protein belongs to the ATPase alpha/beta chains family. As to quaternary structure, F-type ATPases have 2 components, CF(1) - the catalytic core - and CF(0) - the membrane proton channel. CF(1) has five subunits: alpha(3), beta(3), gamma(1), delta(1), epsilon(1). CF(0) has four main subunits: a(1), b(1), b'(1) and c(9-12).

It localises to the cell inner membrane. The enzyme catalyses ATP + H2O + 4 H(+)(in) = ADP + phosphate + 5 H(+)(out). Produces ATP from ADP in the presence of a proton gradient across the membrane. The alpha chain is a regulatory subunit. In Cereibacter sphaeroides (strain ATCC 17029 / ATH 2.4.9) (Rhodobacter sphaeroides), this protein is ATP synthase subunit alpha 2.